The sequence spans 477 residues: Ribulose bisphosphate carboxylase large chain (477 aa).

Positions 1-2 are excised as a propeptide; sequence MS. P3 carries the N-acetylproline modification. The residue at position 14 (K14) is an N6,N6,N6-trimethyllysine. Substrate contacts are provided by N123 and T173. K175 serves as the catalytic Proton acceptor. K177 serves as a coordination point for substrate. 3 residues coordinate Mg(2+): K201, D203, and E204. The residue at position 201 (K201) is an N6-carboxylysine. The Proton acceptor role is filled by H294. The substrate site is built by R295, H327, and S379.

It belongs to the RuBisCO large chain family. Type I subfamily. Heterohexadecamer of 8 large chains and 8 small chains; disulfide-linked. The disulfide link is formed within the large subunit homodimers. Mg(2+) serves as cofactor. In terms of processing, the disulfide bond which can form in the large chain dimeric partners within the hexadecamer appears to be associated with oxidative stress and protein turnover.

It is found in the plastid. It localises to the chloroplast. The catalysed reaction is 2 (2R)-3-phosphoglycerate + 2 H(+) = D-ribulose 1,5-bisphosphate + CO2 + H2O. It catalyses the reaction D-ribulose 1,5-bisphosphate + O2 = 2-phosphoglycolate + (2R)-3-phosphoglycerate + 2 H(+). RuBisCO catalyzes two reactions: the carboxylation of D-ribulose 1,5-bisphosphate, the primary event in carbon dioxide fixation, as well as the oxidative fragmentation of the pentose substrate in the photorespiration process. Both reactions occur simultaneously and in competition at the same active site. The chain is Ribulose bisphosphate carboxylase large chain from Oryza nivara (Indian wild rice).